Consider the following 424-residue polypeptide: Insertion element IS2A uncharacterized 48.2 kDa protein (424 aa).

In terms of domain architecture, Integrase catalytic spans 229 to 412 (KPAVPPSKRA…SPREYLRHGA (184 aa)).

It belongs to the transposase 8 family.

The protein is Insertion element IS2A uncharacterized 48.2 kDa protein of Escherichia coli.